A 207-amino-acid chain; its full sequence is MSHGPLRVGIGGPVGAGKTTLTEKLCAALAHRCSMAVITNDIYTREDAEALMRAQVLPAERIRGVETGGCPHTAIREDASINLAAVADLRRTFPDLDLILIESGGDNLAATFSPELADLTIYVIDTAAGQDIPRKRGPGLARSDLLVVNKIDLAPHVGVNLARLEADTQAARGQRPYVMARMRAGVGVEAIVAFLEREGGLLLLPQD.

GTP is bound at residue 12–19 (GPVGAGKT).

Belongs to the SIMIBI class G3E GTPase family. UreG subfamily. In terms of assembly, homodimer. UreD, UreF and UreG form a complex that acts as a GTP-hydrolysis-dependent molecular chaperone, activating the urease apoprotein by helping to assemble the nickel containing metallocenter of UreC. The UreE protein probably delivers the nickel.

It is found in the cytoplasm. Its function is as follows. Facilitates the functional incorporation of the urease nickel metallocenter. This process requires GTP hydrolysis, probably effectuated by UreG. The protein is Urease accessory protein UreG of Cereibacter sphaeroides (strain KD131 / KCTC 12085) (Rhodobacter sphaeroides).